Here is a 124-residue protein sequence, read N- to C-terminus: Prefoldin subunit beta (124 aa).

It belongs to the prefoldin subunit beta family. Heterohexamer of two alpha and four beta subunits.

Its subcellular location is the cytoplasm. Functionally, molecular chaperone capable of stabilizing a range of proteins. Seems to fulfill an ATP-independent, HSP70-like function in archaeal de novo protein folding. In Pyrobaculum arsenaticum (strain DSM 13514 / JCM 11321 / PZ6), this protein is Prefoldin subunit beta.